We begin with the raw amino-acid sequence, 140 residues long: Vesicle transport protein GOT1 (140 aa).

4 helical membrane passes run 12 to 32 (IGLG…IFVF), 35 to 55 (GLIA…IGIN), 71 to 91 (ISFG…GLLL), and 96 to 116 (FLVL…RIPL).

The protein belongs to the GOT1 family. Homodimer. No interactions with STL1, STL2, CESA1, CESA3, CESA4, CESA6, CESA7 or CESA8.

The protein resides in the golgi apparatus membrane. Functionally, may be involved in fusion of ER-derived transport vesicles with the Golgi complex. In Arabidopsis thaliana (Mouse-ear cress), this protein is Vesicle transport protein GOT1.